The sequence spans 298 residues: 2-dehydropantoate 2-reductase (298 aa).

Residues 7 to 12 (GGGSVG), N98, and A124 each bind NADP(+). N98 is a binding site for substrate. K179 (proton donor) is an active-site residue. Substrate contacts are provided by N183, N187, N197, and S246. E258 is an NADP(+) binding site.

The protein belongs to the ketopantoate reductase family.

It is found in the cytoplasm. It catalyses the reaction (R)-pantoate + NADP(+) = 2-dehydropantoate + NADPH + H(+). It participates in cofactor biosynthesis; (R)-pantothenate biosynthesis; (R)-pantoate from 3-methyl-2-oxobutanoate: step 2/2. Catalyzes the NADPH-dependent reduction of ketopantoate into pantoic acid. This Bacillus subtilis (strain 168) protein is 2-dehydropantoate 2-reductase (panE).